The chain runs to 317 residues: Melanocyte-stimulating hormone receptor (317 aa).

The Extracellular segment spans residues 1 to 37; sequence MPVLGSQRRLLGSLNCTPPATFPLTLAPNRTGPQCLE. N-linked (GlcNAc...) asparagine glycosylation occurs at Asn-29. A helical transmembrane segment spans residues 38-63; that stretch reads VSIPDGLFLSLGLVSLVENVLVVAAI. The Cytoplasmic segment spans residues 64 to 72; sequence AKNRNLHSP. Residues 73–93 form a helical membrane-spanning segment; the sequence is MYYFICCLAVSDLLVSVSNVL. At 94–118 the chain is on the extracellular side; that stretch reads ETAVMLLLEAGALAARAAVVQQLDN. The helical transmembrane segment at 119 to 140 threads the bilayer; it reads VIDMLICGSMVSSLCFLGAIAV. Residues 141 to 163 are Cytoplasmic-facing; the sequence is DRYISIFYALRYHSVVTLPRAWR. The helical transmembrane segment at 164 to 183 threads the bilayer; it reads IIAAIWVASILTSLLFITYY. The Extracellular segment spans residues 184–191; the sequence is NHTVVLLC. Residues 192 to 211 form a helical membrane-spanning segment; the sequence is LVGFFIAMLALMAVLYVHML. At 212-240 the chain is on the cytoplasmic side; the sequence is ARACQHARGIARLQKRQRPIHQGFGLKGA. A helical membrane pass occupies residues 241-266; sequence ATLTILLGVFFLCWGPFFLHLSLIVL. The Extracellular segment spans residues 267-279; sequence CPQHPTCGCIFKN. Residues 280-300 traverse the membrane as a helical segment; that stretch reads FNLFLALIICNAIVDPLIYAF. Residues 301 to 317 lie on the Cytoplasmic side of the membrane; sequence RSQELRKTLQEVLQCSW. Cys-315 carries the S-palmitoyl cysteine lipid modification.

This sequence belongs to the G-protein coupled receptor 1 family. As to quaternary structure, interacts with MGRN1, but does not undergo MGRN1-mediated ubiquitination; this interaction competes with GNAS-binding and thus inhibits agonist-induced cAMP production. Interacts with OPN3; the interaction results in a decrease in MC1R-mediated cAMP signaling and ultimately a decrease in melanin production in melanocytes.

The protein resides in the cell membrane. In terms of biological role, receptor for MSH (alpha, beta and gamma) and ACTH. The activity of this receptor is mediated by G proteins which activate adenylate cyclase. Mediates melanogenesis, the production of eumelanin (black/brown) and phaeomelanin (red/yellow), via regulation of cAMP signaling in melanocytes. The chain is Melanocyte-stimulating hormone receptor (MC1R) from Capreolus capreolus (European roe deer).